The primary structure comprises 426 residues: Glutamate-1-semialdehyde 2,1-aminomutase (426 aa).

Lys265 carries the N6-(pyridoxal phosphate)lysine modification.

It belongs to the class-III pyridoxal-phosphate-dependent aminotransferase family. HemL subfamily. As to quaternary structure, homodimer. Pyridoxal 5'-phosphate serves as cofactor.

It localises to the cytoplasm. It catalyses the reaction (S)-4-amino-5-oxopentanoate = 5-aminolevulinate. It participates in porphyrin-containing compound metabolism; protoporphyrin-IX biosynthesis; 5-aminolevulinate from L-glutamyl-tRNA(Glu): step 2/2. The chain is Glutamate-1-semialdehyde 2,1-aminomutase from Marinobacter nauticus (strain ATCC 700491 / DSM 11845 / VT8) (Marinobacter aquaeolei).